The primary structure comprises 217 residues: Probable transaldolase (217 aa).

Lys83 serves as the catalytic Schiff-base intermediate with substrate.

It belongs to the transaldolase family. Type 3B subfamily.

The protein resides in the cytoplasm. The enzyme catalyses D-sedoheptulose 7-phosphate + D-glyceraldehyde 3-phosphate = D-erythrose 4-phosphate + beta-D-fructose 6-phosphate. It participates in carbohydrate degradation; pentose phosphate pathway; D-glyceraldehyde 3-phosphate and beta-D-fructose 6-phosphate from D-ribose 5-phosphate and D-xylulose 5-phosphate (non-oxidative stage): step 2/3. Its function is as follows. Transaldolase is important for the balance of metabolites in the pentose-phosphate pathway. This is Probable transaldolase from Bartonella tribocorum (strain CIP 105476 / IBS 506).